Consider the following 202-residue polypeptide: Superoxide dismutase [Mn] (202 aa).

Residue His-27 coordinates Mn(2+). A phosphothreonine mark is found at Thr-34 and Thr-70. His-82, Asp-164, and His-168 together coordinate Mn(2+).

It belongs to the iron/manganese superoxide dismutase family. As to quaternary structure, homodimer. Mn(2+) serves as cofactor.

It carries out the reaction 2 superoxide + 2 H(+) = H2O2 + O2. Functionally, destroys superoxide anion radicals which are normally produced within the cells and which are toxic to biological systems. This Halalkalibacterium halodurans (strain ATCC BAA-125 / DSM 18197 / FERM 7344 / JCM 9153 / C-125) (Bacillus halodurans) protein is Superoxide dismutase [Mn] (sodA).